Reading from the N-terminus, the 233-residue chain is Large ribosomal subunit protein uL3 (233 aa).

It belongs to the universal ribosomal protein uL3 family. In terms of assembly, part of the 50S ribosomal subunit. Forms a cluster with proteins L14 and L19.

Its function is as follows. One of the primary rRNA binding proteins, it binds directly near the 3'-end of the 23S rRNA, where it nucleates assembly of the 50S subunit. The protein is Large ribosomal subunit protein uL3 of Ureaplasma urealyticum serovar 10 (strain ATCC 33699 / Western).